The sequence spans 283 residues: Nopaline-binding periplasmic protein (283 aa).

Residues 1–25 (MKFFNLNALAAVVTGVLLAAGPTQA) form the signal peptide. A disulfide bridge links cysteine 63 with cysteine 70.

This sequence belongs to the bacterial solute-binding protein 3 family.

The protein localises to the periplasm. Component of the nopaline active transport system probably consisting of four subunits: Q, M, P and T. This system is also capable of transporting octopine provided that catabolic functions are induced with nopaline. This is Nopaline-binding periplasmic protein (nocT) from Agrobacterium fabrum (strain C58 / ATCC 33970) (Agrobacterium tumefaciens (strain C58)).